Consider the following 209-residue polypeptide: Potassium-transporting ATPase KdpC subunit (209 aa).

A helical transmembrane segment spans residues 18–38; it reads ALALFVLLGLGLGYSLVATGI.

Belongs to the KdpC family. As to quaternary structure, the system is composed of three essential subunits: KdpA, KdpB and KdpC.

Its subcellular location is the cell inner membrane. Its function is as follows. Part of the high-affinity ATP-driven potassium transport (or Kdp) system, which catalyzes the hydrolysis of ATP coupled with the electrogenic transport of potassium into the cytoplasm. This subunit acts as a catalytic chaperone that increases the ATP-binding affinity of the ATP-hydrolyzing subunit KdpB by the formation of a transient KdpB/KdpC/ATP ternary complex. This is Potassium-transporting ATPase KdpC subunit from Xanthomonas campestris pv. campestris (strain 8004).